The following is a 296-amino-acid chain: MLARFSRTAIKSGRYFSTSAKNTAPVSEAEEIEILKAVEAPQFKDAVKKTRQQYQDMISKLTNDESGKSITQSTGLRPTINISTPSGKIAHALFDAASSMRSVGIVAKELTQVKTIIDKTPGLKTALEGDIDNSEKTVMLELLQGSVTLSPVSGFFLYYMTYENNFKLINPALTDFKRLVGSLDTEMSIKLTVAHQYSEAEKKDLETNVKSFFPPETQFKFSYNVDPEIQKGYIIESPFINHDASYSTAVKKVKAQEQSVLAEFLNDIKNGIKNQTAVWETKEFRDKYLTLDESKN.

The protein belongs to the ATPase delta chain family. Component of the ATP synthase complex composed at least of ATP5F1A/subunit alpha, ATP5F1B/subunit beta, ATP5MC1/subunit c (homooctomer), MT-ATP6/subunit a, MT-ATP8/subunit 8, ATP5ME/subunit e, ATP5MF/subunit f, ATP5MG/subunit g, ATP5MK/subunit k, ATP5MJ/subunit j, ATP5F1C/subunit gamma, ATP5F1D/subunit delta, ATP5F1E/subunit epsilon, ATP5PF/subunit F6, ATP5PB/subunit b, ATP5PD/subunit d, ATP5PO/subunit OSCP. ATP synthase complex consists of a soluble F(1) head domain (subunits alpha(3) and beta(3)) - the catalytic core - and a membrane F(0) domain - the membrane proton channel (subunits c, a, 8, e, f, g, k and j). These two domains are linked by a central stalk (subunits gamma, delta, and epsilon) rotating inside the F1 region and a stationary peripheral stalk (subunits F6, b, d, and OSCP).

The protein localises to the mitochondrion. Its subcellular location is the mitochondrion inner membrane. Its function is as follows. Subunit OSCP, of the mitochondrial membrane ATP synthase complex (F(1)F(0) ATP synthase or Complex V) that produces ATP from ADP in the presence of a proton gradient across the membrane which is generated by electron transport complexes of the respiratory chain. ATP synthase complex consist of a soluble F(1) head domain - the catalytic core - and a membrane F(1) domain - the membrane proton channel. These two domains are linked by a central stalk rotating inside the F(1) region and a stationary peripheral stalk. During catalysis, ATP synthesis in the catalytic domain of F(1) is coupled via a rotary mechanism of the central stalk subunits to proton translocation. In vivo, can only synthesize ATP although its ATP hydrolase activity can be activated artificially in vitro. Part of the complex F(0) domain. Part of the complex F(0) domain and the peripheric stalk, which acts as a stator to hold the catalytic alpha(3)beta(3) subcomplex and subunit a/ATP6 static relative to the rotary elements. The polypeptide is ATP synthase peripheral stalk subunit OSCP, mitochondrial (Dictyostelium discoideum (Social amoeba)).